The following is a 232-amino-acid chain: MKYLNQHEAISVDEELFNEYKFSVDQLMELAGLSCAHVINDCYGSPQSTVKRKVLVCCGPGNNGGDGLVAARHLKLMNFDAHVYYPKRTEKDLFINLQHQCESMGITVSKDCPTLEWVEGEFGLIVDALFGFSFKPPVRESFAPIMDVLNKSKVPIVSVDIPSGWHVEEGPQDECNIQPDCLISLTAPKLCAKKLTNAKHYLGGRFVPPKLQDKYAMELPTYEGNNLFVKLS.

Positions alanine 9 to leucine 219 constitute a YjeF N-terminal domain. Asparagine 62 to aspartate 66 contacts (6S)-NADPHX. Residues asparagine 63 and aspartate 127 each coordinate K(+). Residues glycine 131–proline 137 and aspartate 160 each bind (6S)-NADPHX. Serine 163 lines the K(+) pocket.

The protein belongs to the NnrE/AIBP family. It depends on K(+) as a cofactor.

It catalyses the reaction (6R)-NADHX = (6S)-NADHX. The enzyme catalyses (6R)-NADPHX = (6S)-NADPHX. Functionally, catalyzes the epimerization of the S- and R-forms of NAD(P)HX, a damaged form of NAD(P)H that is a result of enzymatic or heat-dependent hydration. This is a prerequisite for the S-specific NAD(P)H-hydrate dehydratase to allow the repair of both epimers of NAD(P)HX. The chain is NAD(P)H-hydrate epimerase from Aedes aegypti (Yellowfever mosquito).